The following is a 208-amino-acid chain: Uracil phosphoribosyltransferase (208 aa).

5-phospho-alpha-D-ribose 1-diphosphate contacts are provided by residues R78, R103, and 130–138 (DPMLATGGS). Residues I193 and 198–200 (GDA) each bind uracil. A 5-phospho-alpha-D-ribose 1-diphosphate-binding site is contributed by D199.

It belongs to the UPRTase family. Mg(2+) is required as a cofactor.

It catalyses the reaction UMP + diphosphate = 5-phospho-alpha-D-ribose 1-diphosphate + uracil. Its pathway is pyrimidine metabolism; UMP biosynthesis via salvage pathway; UMP from uracil: step 1/1. Its activity is regulated as follows. Allosterically activated by GTP. Its function is as follows. Catalyzes the conversion of uracil and 5-phospho-alpha-D-ribose 1-diphosphate (PRPP) to UMP and diphosphate. The protein is Uracil phosphoribosyltransferase of Shewanella sp. (strain ANA-3).